The primary structure comprises 354 residues: MTISIDKSVKKAEPSIFDLCDDWLKRDRFVFIGWSGLLLLPCAYFALGGFFTGNTFVTSWYTHGLASSYLEGCNVLTAAVSTPSNAMGHSLLLLWGPEAQGDFTRWCQLGGLWTFTALHGAFGLIGFMLRQFEIARAVKIRPYNAIAFSGPIAVFVSVFLIYPLGQQSWFFAPSFGVAAIFRFILFFQGFHNWTLNPFHMMGVAGVLGAALLCAIHGATVENTLFEDGDAANTFRAFNPTQSEETYSMVTANRFWSQIFGVAFANKRWLHFFMLFVPVTGLWMSAIGVVGLALNLRAYDFVSQEIRAAEDPEFETFYTKNLLLNEGIRAWMAAQDQPHENLVFPEEVLPRGNAL.

The residue at position 2 (Thr-2) is an N-acetylthreonine. Thr-2 bears the Phosphothreonine mark. Residues 42–62 traverse the membrane as a helical segment; the sequence is CAYFALGGFFTGNTFVTSWYT. Position 119 (His-119) interacts with chlorophyll a. The helical transmembrane segment at 126 to 142 threads the bilayer; sequence GFMLRQFEIARAVKIRP. The pheophytin a site is built by Gln-131 and Asn-144. Residues 154–167 form a helical membrane-spanning segment; it reads VFVSVFLIYPLGQQ. His-199 contacts chlorophyll a. Residues 209–229 form a helical membrane-spanning segment; that stretch reads AALLCAIHGATVENTLFEDGD. Residues His-216 and Phe-263 each contribute to the a plastoquinone site. His-216 is a binding site for Fe cation. A Fe cation-binding site is contributed by His-270. A helical membrane pass occupies residues 280-296; the sequence is GLWMSAIGVVGLALNLR.

It belongs to the reaction center PufL/M/PsbA/D family. As to quaternary structure, PSII is composed of 1 copy each of membrane proteins PsbA, PsbB, PsbC, PsbD, PsbE, PsbF, PsbH, PsbI, PsbJ, PsbK, PsbL, PsbM, PsbT, PsbX, PsbY, PsbZ, Psb30/Ycf12, at least 3 peripheral proteins of the oxygen-evolving complex and a large number of cofactors. It forms dimeric complexes. Requires The D1/D2 heterodimer binds P680, chlorophylls that are the primary electron donor of PSII, and subsequent electron acceptors. It shares a non-heme iron and each subunit binds pheophytin, quinone, additional chlorophylls, carotenoids and lipids. There is also a Cl(-1) ion associated with D1 and D2, which is required for oxygen evolution. The PSII complex binds additional chlorophylls, carotenoids and specific lipids. as cofactor.

Its subcellular location is the plastid. It is found in the chloroplast thylakoid membrane. It carries out the reaction 2 a plastoquinone + 4 hnu + 2 H2O = 2 a plastoquinol + O2. Its function is as follows. Photosystem II (PSII) is a light-driven water:plastoquinone oxidoreductase that uses light energy to abstract electrons from H(2)O, generating O(2) and a proton gradient subsequently used for ATP formation. It consists of a core antenna complex that captures photons, and an electron transfer chain that converts photonic excitation into a charge separation. The D1/D2 (PsbA/PsbD) reaction center heterodimer binds P680, the primary electron donor of PSII as well as several subsequent electron acceptors. D2 is needed for assembly of a stable PSII complex. The chain is Photosystem II D2 protein from Mesostigma viride (Green alga).